A 382-amino-acid chain; its full sequence is Succinate--CoA ligase [ADP-forming] subunit beta (382 aa).

The ATP-grasp domain maps to 9–237 (RDLLARYGIP…PSAEPEAERR (229 aa)). Residues Lys-45, 52–54 (GRG), Ile-94, and Glu-99 each bind ATP. Mg(2+)-binding residues include Asn-192 and Asp-206. Residues Asn-257 and 314 to 316 (GIT) contribute to the substrate site.

The protein belongs to the succinate/malate CoA ligase beta subunit family. As to quaternary structure, heterotetramer of two alpha and two beta subunits. Requires Mg(2+) as cofactor.

The catalysed reaction is succinate + ATP + CoA = succinyl-CoA + ADP + phosphate. It catalyses the reaction GTP + succinate + CoA = succinyl-CoA + GDP + phosphate. The protein operates within carbohydrate metabolism; tricarboxylic acid cycle; succinate from succinyl-CoA (ligase route): step 1/1. In terms of biological role, succinyl-CoA synthetase functions in the citric acid cycle (TCA), coupling the hydrolysis of succinyl-CoA to the synthesis of either ATP or GTP and thus represents the only step of substrate-level phosphorylation in the TCA. The beta subunit provides nucleotide specificity of the enzyme and binds the substrate succinate, while the binding sites for coenzyme A and phosphate are found in the alpha subunit. This chain is Succinate--CoA ligase [ADP-forming] subunit beta, found in Chloroflexus aggregans (strain MD-66 / DSM 9485).